Consider the following 792-residue polypeptide: Protocadherin beta-18 (792 aa).

Residues 1–26 (MAARGSCVSRQRQVLFLFLLGGLCLA) form the signal peptide. 6 consecutive Cadherin domains span residues 27 to 133 (GSEL…SPIF), 134 to 242 (QDKK…APQF), 243 to 347 (PQEL…APEL), 348 to 451 (IMSS…APAF), 452 to 561 (NQTS…APFV), and 568 to 676 (ASAP…LPEV). The N-linked (GlcNAc...) asparagine glycan is linked to N169. N-linked (GlcNAc...) asparagine glycans are attached at residues N418 and N452. A helical transmembrane segment spans residues 693-713 (VIALASVSSLFLLSVLLFVGV).

The protein resides in the cell membrane. Potential calcium-dependent cell-adhesion protein. The protein is Protocadherin beta-18 (Pcdhb18) of Mus musculus (Mouse).